A 513-amino-acid chain; its full sequence is Varicidin biosynthesis cluster-specific transcription factor (513 aa).

Residues 16-54 constitute a DNA-binding region (zn(2)-C6 fungal-type); the sequence is CERCRLHKLKCTILPQKRFEGPQEAPEQCTRCARAKAKC. 2 disordered regions span residues 58 to 92 and 97 to 116; these read RRAPPKHRASSSNDRSSVSKGINSTTPATRTMQPN and VSSHRIELPPSPASNQSSLK. The segment covering 67–76 has biased composition (low complexity); the sequence is SSSNDRSSVS. Residues 77-92 are compositionally biased toward polar residues; the sequence is KGINSTTPATRTMQPN.

It is found in the nucleus. In terms of biological role, transcription factor that regulates the expression of the gene cluster that mediates the biosynthesis of varicidin A, an antifungal natural product containing a cis-octahydrodecalin core. The chain is Varicidin biosynthesis cluster-specific transcription factor from Talaromyces variabilis (Penicillium variabile).